Reading from the N-terminus, the 366-residue chain is 3-dehydroquinate synthase (366 aa).

Residues 75–80 (DGEQYK), 109–113 (GVIGD), 133–134 (TT), Lys146, Lys155, and 173–176 (CLST) contribute to the NAD(+) site. Zn(2+) contacts are provided by Glu188, His251, and His268.

It belongs to the sugar phosphate cyclases superfamily. Dehydroquinate synthase family. The cofactor is NAD(+). Co(2+) serves as cofactor. It depends on Zn(2+) as a cofactor.

It localises to the cytoplasm. The catalysed reaction is 7-phospho-2-dehydro-3-deoxy-D-arabino-heptonate = 3-dehydroquinate + phosphate. Its pathway is metabolic intermediate biosynthesis; chorismate biosynthesis; chorismate from D-erythrose 4-phosphate and phosphoenolpyruvate: step 2/7. In terms of biological role, catalyzes the conversion of 3-deoxy-D-arabino-heptulosonate 7-phosphate (DAHP) to dehydroquinate (DHQ). The protein is 3-dehydroquinate synthase of Vibrio parahaemolyticus serotype O3:K6 (strain RIMD 2210633).